The primary structure comprises 351 residues: Histidinol-phosphate aminotransferase (351 aa).

K221 carries the N6-(pyridoxal phosphate)lysine modification.

Belongs to the class-II pyridoxal-phosphate-dependent aminotransferase family. Histidinol-phosphate aminotransferase subfamily. Homodimer. Requires pyridoxal 5'-phosphate as cofactor.

It carries out the reaction L-histidinol phosphate + 2-oxoglutarate = 3-(imidazol-4-yl)-2-oxopropyl phosphate + L-glutamate. Its pathway is amino-acid biosynthesis; L-histidine biosynthesis; L-histidine from 5-phospho-alpha-D-ribose 1-diphosphate: step 7/9. In Staphylococcus haemolyticus (strain JCSC1435), this protein is Histidinol-phosphate aminotransferase.